The following is a 160-amino-acid chain: Cytochrome b6-f complex subunit 4 (160 aa).

3 helical membrane passes run 36 to 56 (LLYMFPVVILGTFACVIGLSV), 95 to 115 (LLGVLLMAAVPAGLITVPFIE), and 131 to 151 (ILFLLGTLVAVWLGIGSTFPI).

Belongs to the cytochrome b family. PetD subfamily. As to quaternary structure, the 4 large subunits of the cytochrome b6-f complex are cytochrome b6, subunit IV (17 kDa polypeptide, petD), cytochrome f and the Rieske protein, while the 4 small subunits are petG, petL, petM and petN. The complex functions as a dimer. The N-terminus is blocked.

It localises to the plastid. The protein resides in the chloroplast thylakoid membrane. Component of the cytochrome b6-f complex, which mediates electron transfer between photosystem II (PSII) and photosystem I (PSI), cyclic electron flow around PSI, and state transitions. This is Cytochrome b6-f complex subunit 4 from Chlamydomonas reinhardtii (Chlamydomonas smithii).